The following is a 270-amino-acid chain: Phosphate import ATP-binding protein PstB 1 (270 aa).

The region spanning 24-265 (LAVERLNLFY…PYQRQTEDYI (242 aa)) is the ABC transporter domain. 56-63 (GPSGCGKS) contributes to the ATP binding site.

The protein belongs to the ABC transporter superfamily. Phosphate importer (TC 3.A.1.7) family. As to quaternary structure, the complex is composed of two ATP-binding proteins (PstB), two transmembrane proteins (PstC and PstA) and a solute-binding protein (PstS).

Its subcellular location is the cell inner membrane. It catalyses the reaction phosphate(out) + ATP + H2O = ADP + 2 phosphate(in) + H(+). Functionally, part of the ABC transporter complex PstSACB involved in phosphate import. Responsible for energy coupling to the transport system. The sequence is that of Phosphate import ATP-binding protein PstB 1 from Yersinia pestis bv. Antiqua (strain Antiqua).